Here is an 86-residue protein sequence, read N- to C-terminus: Putative membrane protein insertion efficiency factor (86 aa).

The protein belongs to the UPF0161 family.

The protein localises to the cell inner membrane. In terms of biological role, could be involved in insertion of integral membrane proteins into the membrane. This chain is Putative membrane protein insertion efficiency factor, found in Pseudomonas aeruginosa (strain LESB58).